The following is a 236-amino-acid chain: Chorionic somatomammotropin hormone 1 (236 aa).

Positions 1-36 (MAPASSHRGHQWICDLVRGSCLLLLLVVSNLLLCQG) are cleaved as a signal peptide. A glycan (N-linked (GlcNAc...) asparagine) is linked at Asn89. Intrachain disulfides connect Cys98–Cys214 and Cys231–Cys236.

This sequence belongs to the somatotropin/prolactin family.

Its subcellular location is the secreted. The polypeptide is Chorionic somatomammotropin hormone 1 (CSH1) (Bos taurus (Bovine)).